Reading from the N-terminus, the 218-residue chain is Small ribosomal subunit protein uS3c (218 aa).

In terms of domain architecture, KH type-2 spans 47–118 (VQKNIRISSG…KLNIAITRIS (72 aa)).

The protein belongs to the universal ribosomal protein uS3 family. Part of the 30S ribosomal subunit.

The protein resides in the plastid. Its subcellular location is the chloroplast. This chain is Small ribosomal subunit protein uS3c (rps3), found in Barbarea verna (Land cress).